A 1047-amino-acid polypeptide reads, in one-letter code: Ubiquitin carboxyl-terminal hydrolase 28 (1047 aa).

Disordered stretches follow at residues 60-95 (DQEP…DPEK) and 110-138 (SPKA…RCEV). The 20-residue stretch at 94–113 (EKKGDVHSAVAYGQLESPKA) folds into the UIM domain. Residues 111-128 (PKAHAAERPQEVHSPEHK) show a composition bias toward basic and acidic residues. Residues 156–651 (VGMKNIGNTC…SAYCLMYISD (496 aa)) form the USP domain. The Nucleophile role is filled by C165. Residues 461–486 (STEDSQMMDRQSQGESLILGTPSQPD) show a composition bias toward polar residues. A disordered region spans residues 461 to 528 (STEDSQMMDR…SEPPAEMSDC (68 aa)). The span at 489–498 (LDGKDGKPED) shows a compositional bias: basic and acidic residues. Over residues 504–516 (ANSSPQQQLNAPL) the composition is skewed to polar residues. The Proton acceptor role is filled by H601. The interval 694–735 (EAEEWEEEQSCKIPSTASESQELSPESGLDPPAAHEQSLRSL) is disordered. Over residues 705-717 (KIPSTASESQELS) the composition is skewed to polar residues.

It belongs to the peptidase C19 family. USP28 subfamily.

Its subcellular location is the nucleus. It is found in the nucleoplasm. It catalyses the reaction Thiol-dependent hydrolysis of ester, thioester, amide, peptide and isopeptide bonds formed by the C-terminal Gly of ubiquitin (a 76-residue protein attached to proteins as an intracellular targeting signal).. Its function is as follows. Deubiquitinase involved in DNA damage response checkpoint and MYC proto-oncogene stability. Involved in DNA damage induced apoptosis by specifically deubiquitinating proteins of the DNA damage pathway such as CLSPN. Also involved in G2 DNA damage checkpoint, by deubiquitinating CLSPN, and preventing its degradation by the anaphase promoting complex/cyclosome (APC/C). Specifically deubiquitinates MYC in the nucleoplasm, leading to prevent MYC degradation by the proteasome. Deubiquitinates ZNF304, hence may prevent ZNF304 degradation by the proteasome, leading to the activated KRAS-mediated promoter hypermethylation and transcriptional silencing of tumor suppressor genes (TSGs). The polypeptide is Ubiquitin carboxyl-terminal hydrolase 28 (USP28) (Gallus gallus (Chicken)).